The following is a 255-amino-acid chain: Phosphatidylcholine synthase (255 aa).

The Cytoplasmic segment spans residues 1–13; sequence MNPIKPPFTLNQY. Residues 14-34 traverse the membrane as a helical segment; that stretch reads FAAWFVHVFTASAACIGVFSL. Residues 35 to 42 lie on the Periplasmic side of the membrane; that stretch reads YKIYQHDY. A helical transmembrane segment spans residues 43–63; the sequence is VFALWLMAITVFIDAVDGSLA. Residues 64 to 76 are Cytoplasmic-facing; the sequence is RLVHVKSVLPKID. A helical membrane pass occupies residues 77 to 97; it reads GALLDNIVDYLNYVITPCFFL. The Periplasmic portion of the chain corresponds to 98 to 103; it reads LVKPGM. The helical transmembrane segment at 104-124 threads the bilayer; that stretch reads LPADYVVPITAAITITSAYQF. At 125-133 the chain is on the cytoplasmic side; sequence CQDDAKTPD. The helical transmembrane segment at 134 to 154 threads the bilayer; sequence HFFKGFPCYWNITVFYMYIFN. Thr-155 is a topological domain (periplasmic). A helical membrane pass occupies residues 156–175; it reads SMIVNTVLLSLFCVLIFIPV. Over 176–190 the chain is Cytoplasmic; that stretch reads KYVYPSRLDYLTESR. The chain crosses the membrane as a helical span at residues 191–211; sequence VLKILMHCCSALYGISSFCLL. At 212 to 217 the chain is on the periplasmic side; the sequence is VNYPET. A helical transmembrane segment spans residues 218-238; it reads NKLWVSLSLGYVGMYLFLSFY. Topologically, residues 239-255 are cytoplasmic; it reads RTYYPMFKAKITANNKD.

This sequence belongs to the CDP-alcohol phosphatidyltransferase class-I family. Mn(2+) is required as a cofactor.

The protein resides in the cell inner membrane. It catalyses the reaction a CDP-1,2-diacyl-sn-glycerol + choline = a 1,2-diacyl-sn-glycero-3-phosphocholine + CMP + H(+). In terms of biological role, condenses choline with CDP-diglyceride to produce phosphatidylcholine and CMP. Affects virulence of this bacterium when there is a complete loss of phosphatidylcholine formation due to absence of both the synthase (pcs) and the methylation (pmtA) pathways. Reduced virulence results from lowered yields of bacteria within host macrophages and because of loss of high multiplicity cytotoxicity. In Legionella pneumophila subsp. pneumophila (strain Philadelphia 1 / ATCC 33152 / DSM 7513), this protein is Phosphatidylcholine synthase.